The sequence spans 414 residues: Ornithine aminotransferase (414 aa).

C154 and C163 form a disulfide bridge. K262 carries the post-translational modification N6-(pyridoxal phosphate)lysine.

This sequence belongs to the class-III pyridoxal-phosphate-dependent aminotransferase family. As to quaternary structure, homodimer. The cofactor is pyridoxal 5'-phosphate. In terms of processing, the disulfide bond between Cys-154 and Cys-163 is reduced by TRX1 which increases OAT catalytic activity.

Its subcellular location is the cytoplasm. It carries out the reaction a 2-oxocarboxylate + L-ornithine = L-glutamate 5-semialdehyde + an L-alpha-amino acid. The catalysed reaction is L-ornithine + 2-oxoglutarate = L-glutamate 5-semialdehyde + L-glutamate. Its pathway is amino-acid biosynthesis; L-proline biosynthesis; L-glutamate 5-semialdehyde from L-ornithine: step 1/1. Its activity is regulated as follows. Unlike for mammalian OATs, activity is increased by TRX1-mediated reduction of the disulfide bond between Cys-154 and Cys-163. Binding to TRX1 may also induce conformational changes that facilitate substrate binding. Functionally, catalyzes the transamination of alpha-ketoglutarate with ornithine or N-acetylornithine and of glutamate-5-semialdehyde with glutamate and alanine. In Plasmodium chabaudi chabaudi, this protein is Ornithine aminotransferase.